Reading from the N-terminus, the 215-residue chain is Putative zinc finger protein ORF121 (215 aa).

An RING-type; degenerate zinc finger spans residues 53-105 (CVICMEPTYTKKTLAECDIEGGALRVTTMPCPTHYICDNCIRQEMEDKCPICR).

In Magallana gigas (Pacific oyster), this protein is Putative zinc finger protein ORF121.